An 884-amino-acid polypeptide reads, in one-letter code: Lon protease homolog 2, peroxisomal (884 aa).

In terms of domain architecture, Lon N-terminal spans 12 to 255; the sequence is LAILPFRNKV…KATELVDRHL (244 aa). The interval 67–101 is disordered; it reads SLLSPGVGSDSGEGGSKAPGGSAGESTKQDTKNGK. Residues 75 to 89 show a composition bias toward gly residues; the sequence is SDSGEGGSKAPGGSA. ATP is bound at residue 408–415; that stretch reads GPPGVGKT. The Lon proteolytic domain occupies 689–874; the sequence is VASPGVSVGL…EEVLDHAFEG (186 aa). Catalysis depends on residues serine 780 and lysine 823. The short motif at 882–884 is the Microbody targeting signal element; that stretch reads SKL.

This sequence belongs to the peptidase S16 family. Expressed in roots, leaves and panicles.

The protein resides in the peroxisome matrix. It carries out the reaction Hydrolysis of proteins in presence of ATP.. ATP-dependent serine protease that mediates the selective degradation of misfolded and unassembled polypeptides in the peroxisomal matrix. Necessary for type 2 peroxisome targeting signal (PTS2)-containing protein processing and facilitates peroxisome matrix protein import. The sequence is that of Lon protease homolog 2, peroxisomal (LON1) from Oryza sativa subsp. indica (Rice).